Consider the following 223-residue polypeptide: Proteasome subunit beta type-1 (223 aa).

This sequence belongs to the peptidase T1B family. The 26S proteasome consists of a 20S proteasome core and two 19S regulatory subunits. The 20S proteasome core is composed of 28 subunits that are arranged in four stacked rings, resulting in a barrel-shaped structure. The two end rings are each formed by seven alpha subunits, and the two central rings are each formed by seven beta subunits. The catalytic chamber with the active sites is on the inside of the barrel.

It is found in the cytoplasm. The protein localises to the nucleus. In terms of biological role, non-catalytic component of the proteasome, a multicatalytic proteinase complex which is characterized by its ability to cleave peptides with Arg, Phe, Tyr, Leu, and Glu adjacent to the leaving group at neutral or slightly basic pH. The proteasome has an ATP-dependent proteolytic activity. The protein is Proteasome subunit beta type-1 (PBF1) of Petunia hybrida (Petunia).